The following is a 328-amino-acid chain: Malate dehydrogenase (328 aa).

11–17 (GAAGQIG) is an NAD(+) binding site. Positions 94 and 100 each coordinate substrate. NAD(+) contacts are provided by residues Asn-107, Gln-114, and 131–133 (VGN). The substrate site is built by Asn-133 and Arg-164. Catalysis depends on His-189, which acts as the Proton acceptor.

Belongs to the LDH/MDH superfamily. MDH type 2 family.

It carries out the reaction (S)-malate + NAD(+) = oxaloacetate + NADH + H(+). Functionally, catalyzes the reversible oxidation of malate to oxaloacetate. The chain is Malate dehydrogenase from Xanthomonas campestris pv. campestris (strain B100).